The following is a 1160-amino-acid chain: Pesticidal crystal protein Cry1Db (1160 aa).

Belongs to the delta endotoxin family.

Promotes colloidosmotic lysis by binding to the midgut epithelial cells of insects. This Bacillus thuringiensis protein is Pesticidal crystal protein Cry1Db (cry1Db).